We begin with the raw amino-acid sequence, 238 residues long: 4-hydroxy-tetrahydrodipicolinate reductase (238 aa).

12–17 (GASGRM) is an NAD(+) binding site. Residue R40 coordinates NADP(+). NAD(+) is bound by residues 93–95 (GTT) and 117–120 (ASNF). Catalysis depends on H149, which acts as the Proton donor/acceptor. H150 provides a ligand contact to (S)-2,3,4,5-tetrahydrodipicolinate. Residue K153 is the Proton donor of the active site. 159 to 160 (GT) is a (S)-2,3,4,5-tetrahydrodipicolinate binding site.

The protein belongs to the DapB family.

Its subcellular location is the cytoplasm. The catalysed reaction is (S)-2,3,4,5-tetrahydrodipicolinate + NAD(+) + H2O = (2S,4S)-4-hydroxy-2,3,4,5-tetrahydrodipicolinate + NADH + H(+). The enzyme catalyses (S)-2,3,4,5-tetrahydrodipicolinate + NADP(+) + H2O = (2S,4S)-4-hydroxy-2,3,4,5-tetrahydrodipicolinate + NADPH + H(+). Its pathway is amino-acid biosynthesis; L-lysine biosynthesis via DAP pathway; (S)-tetrahydrodipicolinate from L-aspartate: step 4/4. In terms of biological role, catalyzes the conversion of 4-hydroxy-tetrahydrodipicolinate (HTPA) to tetrahydrodipicolinate. In Xanthomonas euvesicatoria pv. vesicatoria (strain 85-10) (Xanthomonas campestris pv. vesicatoria), this protein is 4-hydroxy-tetrahydrodipicolinate reductase.